Reading from the N-terminus, the 41-residue chain is Cytochrome b559 subunit beta (41 aa).

The chain crosses the membrane as a helical span at residues 16–32; the sequence is WLAVHALAIPTVFFLGS. Position 20 (H20) interacts with heme.

It belongs to the PsbE/PsbF family. Heterodimer of an alpha subunit and a beta subunit. PSII is composed of 1 copy each of membrane proteins PsbA, PsbB, PsbC, PsbD, PsbE, PsbF, PsbH, PsbI, PsbJ, PsbK, PsbL, PsbM, PsbT, PsbY, PsbZ, Psb30/Ycf12, at least 3 peripheral proteins of the oxygen-evolving complex and a large number of cofactors. It forms dimeric complexes. The cofactor is heme b.

The protein resides in the plastid. Its subcellular location is the chloroplast thylakoid membrane. Its function is as follows. This b-type cytochrome is tightly associated with the reaction center of photosystem II (PSII). PSII is a light-driven water:plastoquinone oxidoreductase that uses light energy to abstract electrons from H(2)O, generating O(2) and a proton gradient subsequently used for ATP formation. It consists of a core antenna complex that captures photons, and an electron transfer chain that converts photonic excitation into a charge separation. The protein is Cytochrome b559 subunit beta of Euglena gracilis.